Consider the following 502-residue polypeptide: Solute carrier family 2, facilitated glucose transporter member 5 (502 aa).

Residue Met-1 is modified to N-acetylmethionine. The Cytoplasmic segment spans residues 1 to 17 (MEKEDQEKTGKLTLVLA). The chain crosses the membrane as a helical span at residues 18–38 (LATFLAAFGSSFQYGYNVAAV). Tyr-31 lines the D-fructose pocket. Over 39 to 67 (NSPSEFMQQFYNDTYYDRNKENIESFTLT) the chain is Extracellular. A glycan (N-linked (GlcNAc...) asparagine) is linked at Asn-50. A helical membrane pass occupies residues 68–90 (LLWSLTVSMFPFGGFIGSLMVGF). At 91 to 97 (LVNNLGR) the chain is on the cytoplasmic side. Residues 98–118 (KGALLFNNIFSILPAILMGCS) form a helical membrane-spanning segment. Topologically, residues 119-125 (KIAKSFE) are extracellular. Residues 126 to 148 (IIIASRLLVGICAGISSNVVPMY) form a helical membrane-spanning segment. At 149-160 (LGELAPKNLRGA) the chain is on the cytoplasmic side. Residues 161-181 (LGVVPQLFITVGILVAQLFGL) traverse the membrane as a helical segment. A D-fructose-binding site is contributed by Gln-166. Residues 182–191 (RSVLASEEGW) are Extracellular-facing. A helical membrane pass occupies residues 192 to 212 (PILLGLTGVPAGLQLLLLPFF). Over 213 to 276 (PESPRYLLIQ…LFRMQSLRWQ (64 aa)) the chain is Cytoplasmic. A helical transmembrane segment spans residues 277–297 (LISTIVLMAGQQLSGVNAIYY). D-fructose-binding positions include Gln-287 and 295 to 297 (IYY). Residues 298 to 312 (YADQIYLSAGVKSND) are Extracellular-facing. Residues 313 to 333 (VQYVTAGTGAVNVFMTMVTVF) form a helical membrane-spanning segment. Over 334 to 341 (VVELWGRR) the chain is Cytoplasmic. A helical membrane pass occupies residues 342–362 (NLLLIGFSTCLTACIVLTVAL). At 363–370 (ALQNTISW) the chain is on the extracellular side. Residues 371-393 (MPYVSIVCVIVYVIGHAVGPSPI) traverse the membrane as a helical segment. His-386 contributes to the D-fructose binding site. Over 394–411 (PALFITEIFLQSSRPSAY) the chain is Cytoplasmic. A helical transmembrane segment spans residues 412–432 (MIGGSVHWLSNFIVGLIFPFI). 418–419 (HW) contributes to the D-fructose binding site. The Extracellular segment spans residues 433–438 (QVGLGP). A helical membrane pass occupies residues 439-459 (YSFIIFAIICLLTTIYIFMVV). The Cytoplasmic portion of the chain corresponds to 460–502 (PETKGRTFVEINQIFAKKNKVSDVYPEKEEKELNDLPPATREQ).

Belongs to the major facilitator superfamily. Sugar transporter (TC 2.A.1.1) family. Glucose transporter subfamily. As to expression, detected in jejunum. Detected in kidney, skeletal muscle, brain and adipose tissue (at protein level). Detected in small intestine and in kidney, and at much lower levels in brain. Detected in enterocytes in duodenum, jejunum, and ileum.

The protein localises to the apical cell membrane. It is found in the cell membrane. The protein resides in the sarcolemma. It catalyses the reaction D-fructose(out) = D-fructose(in). Its activity is regulated as follows. Fructose uptake is inhibited by mercury ions. Fructose uptake is only slightly inhibited by cytochalasin B. In terms of biological role, functions as a fructose transporter that has only low activity with other monosaccharides. Can mediate the uptake of deoxyglucose, but with low efficiency. Essential for fructose uptake in the small intestine. Plays a role in the regulation of salt uptake and blood pressure in response to dietary fructose. Required for the development of high blood pressure in response to high dietary fructose intake. The polypeptide is Solute carrier family 2, facilitated glucose transporter member 5 (Rattus norvegicus (Rat)).